The following is a 342-amino-acid chain: Polyprenyl transferase trt2 (342 aa).

Helical transmembrane passes span V71–L91, I95–I115, A141–S161, C163–F183, P187–V207, T216–C236, L261–V278, L282–V304, and A319–L339.

The protein belongs to the UbiA prenyltransferase family. Mg(2+) serves as cofactor.

It is found in the membrane. It carries out the reaction 3,5-dimethylorsellinate + (2E,6E)-farnesyl diphosphate = (3R)-3-farnesyl-6-hydroxy-2,3,5-trimethyl-4-oxocyclohexa-1,5-diene-1-carboxylate + diphosphate + H(+). It participates in secondary metabolite biosynthesis; terpenoid biosynthesis. Polyprenyl transferase; part of the gene cluster that mediates the biosynthesis of terretonin, a fungal meroterpenoid that acts as a mycotoxin. The first step of the pathway is the synthesis of 3,5-dimethylorsellinic acid (DMOA) by the polyketide synthase trt4. DMOA is then prenylated into farnesyl-DMOA by the polyprenyl transferase trt2. Methylation by the methyltransferase trt5 then leads to farnesyl-DMOA methyl ester which is further subject to epoxidation by the FAD-dependent monooxygenase trt8 to yield epoxyfarnesyl-DMOA methyl ester. Cyclization of epoxyfarnesyl-DMOA methyl ester by the terpene cyclase trt1 leads to a tetracycle intermediate which is in turn converted to preterretonin. Dehydrogenase trt9 comes next to transform preterretonin to preterrenoid. The FAD-dependent monooxygenase trt3 is then required for the C-hydroxylation at C16 of preterrenoid to yield terrenoid. The cytochrome P450 trt6 catalyzes three successive oxidations to transform terrenoid into an unstable intermediate, which then undergoes the D-ring expansion and unusual rearrangement of the methoxy group to afford the core skeleton of terretonin. Trt14 catalyzes the D-ring expansion of terretonin involving intramolecular methoxy rearrangement as well as the hydrolysis of the expanded D-ring and the methyl ester moiety. Finally, the nonheme iron-dependent dioxygenase trt7 accomplishes the last two oxidation reactions steps to complete the biosynthesis of terretonin. Terretonin C is produced via spontaneous decarboxylation of the terretonin precursor. Another shunt product of the terretonin biosynthesis is dihydrofarnesyl-DMOA, derived from epoxyfarnesyl-DMOA through hydrolysis of the epoxide. The chain is Polyprenyl transferase trt2 from Aspergillus terreus (strain NIH 2624 / FGSC A1156).